A 187-amino-acid polypeptide reads, in one-letter code: Putative zinc finger protein 833 (187 aa).

6 C2H2-type zinc fingers span residues 10 to 32, 38 to 60, 66 to 88, 94 to 116, 122 to 144, and 150 to 172; these read YKCKFCGKAFDNLHLYLTHERTH, YECNKCGKAFSCSSSIRKHARIH, YICKQCGKAFRYSSSIRNHENTH, CECKQCGKAFSYSSYFRIHERIH, YKCKECGKTFTYPSAFHKHKSTH, and YECKECGKAFDCFSSFHSHEGVH.

The chain is Putative zinc finger protein 833 (ZNF833P) from Homo sapiens (Human).